The primary structure comprises 308 residues: Ribosomal RNA large subunit methyltransferase F (308 aa).

Belongs to the methyltransferase superfamily. METTL16/RlmF family.

The protein localises to the cytoplasm. The enzyme catalyses adenosine(1618) in 23S rRNA + S-adenosyl-L-methionine = N(6)-methyladenosine(1618) in 23S rRNA + S-adenosyl-L-homocysteine + H(+). Its function is as follows. Specifically methylates the adenine in position 1618 of 23S rRNA. This Escherichia coli O157:H7 protein is Ribosomal RNA large subunit methyltransferase F.